The primary structure comprises 1193 residues: uncharacterized protein (1193 aa).

A signal peptide spans 1–25 (MKIKFINYLLLFFIIFLNYNGFVKS). Residues 26-1172 (DCYQELDLVL…PQDPSDELST (1147 aa)) lie on the Extracellular side of the membrane. N-linked (GlcNAc...) asparagine glycans are attached at residues Asn-90, Asn-183, Asn-226, Asn-265, Asn-281, Asn-345, Asn-357, Asn-436, Asn-516, Asn-552, Asn-583, Asn-627, Asn-712, Asn-765, Asn-822, Asn-938, Asn-1038, and Asn-1092. A helical membrane pass occupies residues 1173 to 1193 (SSFVQVNLLFLSILIFTIFIF).

The protein resides in the membrane. This is an uncharacterized protein from Dictyostelium discoideum (Social amoeba).